The sequence spans 202 residues: Small ribosomal subunit protein uS4c (202 aa).

An S4 RNA-binding domain is found at 90–153; the sequence is MRLDNVIFRL…KSEAIISKNI (64 aa).

This sequence belongs to the universal ribosomal protein uS4 family. As to quaternary structure, part of the 30S ribosomal subunit. Contacts protein S5. The interaction surface between S4 and S5 is involved in control of translational fidelity.

It is found in the plastid. The protein localises to the chloroplast. One of the primary rRNA binding proteins, it binds directly to 16S rRNA where it nucleates assembly of the body of the 30S subunit. In terms of biological role, with S5 and S12 plays an important role in translational accuracy. This Cyathophorum bulbosum (Moss) protein is Small ribosomal subunit protein uS4c (rps4).